A 490-amino-acid chain; its full sequence is Membrane-bound lytic murein transglycosylase F (490 aa).

Positions 1-32 (MFALTAYRLRCAAWLLATGIFLLLAGCSEAKA) are cleaved as a signal peptide. Residues 33-269 (PTALERVQKE…RLKDRYYGHV (237 aa)) are non-LT domain. The segment at 270–490 (DVLGYVGAYT…PEEDSGDEKL (221 aa)) is LT domain. The active site involves Glu-316. The disordered stretch occupies residues 467–490 (AESGLHLPGVNKTRPEEDSGDEKL). Residues 479–490 (TRPEEDSGDEKL) are compositionally biased toward basic and acidic residues.

This sequence in the N-terminal section; belongs to the bacterial solute-binding protein 3 family. The protein in the C-terminal section; belongs to the transglycosylase Slt family.

It localises to the cell outer membrane. The enzyme catalyses Exolytic cleavage of the (1-&gt;4)-beta-glycosidic linkage between N-acetylmuramic acid (MurNAc) and N-acetylglucosamine (GlcNAc) residues in peptidoglycan, from either the reducing or the non-reducing ends of the peptidoglycan chains, with concomitant formation of a 1,6-anhydrobond in the MurNAc residue.. Functionally, murein-degrading enzyme that degrades murein glycan strands and insoluble, high-molecular weight murein sacculi, with the concomitant formation of a 1,6-anhydromuramoyl product. Lytic transglycosylases (LTs) play an integral role in the metabolism of the peptidoglycan (PG) sacculus. Their lytic action creates space within the PG sacculus to allow for its expansion as well as for the insertion of various structures such as secretion systems and flagella. This is Membrane-bound lytic murein transglycosylase F from Pseudomonas aeruginosa (strain ATCC 15692 / DSM 22644 / CIP 104116 / JCM 14847 / LMG 12228 / 1C / PRS 101 / PAO1).